The primary structure comprises 587 residues: Aspartate--tRNA ligase (587 aa).

Glu173 provides a ligand contact to L-aspartate. The aspartate stretch occupies residues 197-200 (QTLK). L-aspartate is bound at residue Arg219. Residues 219–221 (RDE) and Gln228 each bind ATP. Position 446 (His446) interacts with L-aspartate. ATP is bound at residue Glu480. Arg487 serves as a coordination point for L-aspartate. ATP is bound at residue 532 to 535 (GLDR).

It belongs to the class-II aminoacyl-tRNA synthetase family. Type 1 subfamily. As to quaternary structure, homodimer.

It localises to the cytoplasm. The catalysed reaction is tRNA(Asp) + L-aspartate + ATP = L-aspartyl-tRNA(Asp) + AMP + diphosphate. Catalyzes the attachment of L-aspartate to tRNA(Asp) in a two-step reaction: L-aspartate is first activated by ATP to form Asp-AMP and then transferred to the acceptor end of tRNA(Asp). The chain is Aspartate--tRNA ligase from Bacteroides thetaiotaomicron (strain ATCC 29148 / DSM 2079 / JCM 5827 / CCUG 10774 / NCTC 10582 / VPI-5482 / E50).